Here is a 153-residue protein sequence, read N- to C-terminus: MKPRHKRLAIAGGVLVAVGAIATLVLNAFQSNLVFFYSPSQVVAKEVPDGRTFRLGGMVEDGSVKREGVMVSFVVTDTVQKVPVRFEGILPDLFKEGKGVVAQGKVEGGTFIAKEVLAKHDENYMPPEAAEALKRAKEGGQMQSSQAATGDPR.

Over 1 to 7 (MKPRHKR) the chain is Cytoplasmic. A helical; Signal-anchor for type II membrane protein membrane pass occupies residues 8–28 (LAIAGGVLVAVGAIATLVLNA). Over 29-153 (FQSNLVFFYS…SSQAATGDPR (125 aa)) the chain is Periplasmic. Residues His-120 and Tyr-124 each coordinate heme. Positions 130–153 (AEALKRAKEGGQMQSSQAATGDPR) are disordered. Polar residues predominate over residues 141–153 (QMQSSQAATGDPR).

It belongs to the CcmE/CycJ family.

Its subcellular location is the cell inner membrane. Its function is as follows. Heme chaperone required for the biogenesis of c-type cytochromes. Transiently binds heme delivered by CcmC and transfers the heme to apo-cytochromes in a process facilitated by CcmF and CcmH. The protein is Cytochrome c-type biogenesis protein CcmE of Leptothrix cholodnii (strain ATCC 51168 / LMG 8142 / SP-6) (Leptothrix discophora (strain SP-6)).